The primary structure comprises 351 residues: ADP-glucose phosphorylase (351 aa).

A disordered region spans residues 1–63 (MTSPSHASDR…QNPNPKPSSC (63 aa)). 41-44 (RAKR) contributes to the ADP-alpha-D-glucose binding site. Residues cysteine 63 and cysteine 66 each contribute to the Zn(2+) site. ADP-alpha-D-glucose contacts are provided by residues 72–74 (ECA) and asparagine 94. Histidine 133 contributes to the Zn(2+) binding site. ADP-alpha-D-glucose contacts are provided by residues asparagine 173 and 179 to 182 (GASM). Histidine 184 serves as a coordination point for Zn(2+). Residue histidine 186 is the Tele-AMP-histidine intermediate of the active site. Glutamine 188 is a binding site for ADP-alpha-D-glucose. Residues cysteine 216, cysteine 219, histidine 255, and histidine 310 each contribute to the Zn(2+) site. Residues glycine 321 and 325-326 (FE) contribute to the ADP-alpha-D-glucose site.

This sequence belongs to the galactose-1-phosphate uridylyltransferase type 1 family. In terms of assembly, homodimer. The cofactor is Zn(2+).

It carries out the reaction alpha-D-glucose 1-phosphate + ADP + H(+) = ADP-alpha-D-glucose + phosphate. Its function is as follows. Catalyzes the conversion of ADP-glucose and inorganic phosphate (Pi) into glucose-1-phosphate and ADP. Does not possess galactose-1-phosphate uridylyltransferase activity. This chain is ADP-glucose phosphorylase, found in Arabidopsis thaliana (Mouse-ear cress).